Reading from the N-terminus, the 338-residue chain is 1-aminocyclopropane-1-carboxylate deaminase (338 aa).

At lysine 51 the chain carries N6-(pyridoxal phosphate)lysine. The active-site Nucleophile is serine 78.

This sequence belongs to the ACC deaminase/D-cysteine desulfhydrase family. Homotrimer. Pyridoxal 5'-phosphate is required as a cofactor.

The enzyme catalyses 1-aminocyclopropane-1-carboxylate + H2O = 2-oxobutanoate + NH4(+). Functionally, catalyzes a cyclopropane ring-opening reaction, the irreversible conversion of 1-aminocyclopropane-1-carboxylate (ACC) to ammonia and alpha-ketobutyrate. Allows growth on ACC as a nitrogen source. The sequence is that of 1-aminocyclopropane-1-carboxylate deaminase from Methylibium petroleiphilum (strain ATCC BAA-1232 / LMG 22953 / PM1).